Here is a 482-residue protein sequence, read N- to C-terminus: Aspartic proteinase 36 (482 aa).

The N-terminal stretch at 1 to 27 (MVTTMDPSRISRIVAVVFVLVIQVVSG) is a signal peptide. Asn32 carries N-linked (GlcNAc...) asparagine glycosylation. In terms of domain architecture, Peptidase A1 spans 78–429 (YFTKIKLGSP…DLENEVIGWA (352 aa)). Asp96 is an active-site residue. N-linked (GlcNAc...) asparagine glycosylation is found at Asn178, Asn204, and Asn226. Asp310 is a catalytic residue. A disulfide bridge connects residues Cys347 and Cys388. Asn432 is a glycosylation site (N-linked (GlcNAc...) asparagine). Ser456 carries the GPI-anchor amidated serine lipid modification. Positions 457-482 (AASSVMNGTLVTLLSILIWVFHSFTS) are cleaved as a propeptide — removed in mature form. Asn463 carries N-linked (GlcNAc...) asparagine glycosylation.

It belongs to the peptidase A1 family. As to expression, highly expressed in pollen and pollen tubes. Mostly expressed in roots, flowers and inflorescence, and at lower levels in stems, seedlings and siliques.

It localises to the cell membrane. The protein resides in the cytoplasm. The protein localises to the cytosol. Functionally, displays aspartic proteolytic activity. Together with A39, contributes to pollen and ovule development, including the apical cell wall constitution of the growing pollen tubes. This Arabidopsis thaliana (Mouse-ear cress) protein is Aspartic proteinase 36.